We begin with the raw amino-acid sequence, 223 residues long: UPF0502 protein Sbal223_2520 (223 aa).

It belongs to the UPF0502 family.

This Shewanella baltica (strain OS223) protein is UPF0502 protein Sbal223_2520.